A 444-amino-acid polypeptide reads, in one-letter code: Homogentisate 1,2-dioxygenase (444 aa).

Positions 92–111 (GDSADVPPTPPNQLRWDPLP) are disordered. The active-site Proton acceptor is the histidine 298. Fe cation is bound by residues histidine 341 and glutamate 347. The homogentisate site is built by tyrosine 356 and histidine 377. Histidine 377 provides a ligand contact to Fe cation.

The protein belongs to the homogentisate dioxygenase family. Hexamer; dimer of trimers. Requires Fe cation as cofactor.

It catalyses the reaction homogentisate + O2 = 4-maleylacetoacetate + H(+). The protein operates within amino-acid degradation; L-phenylalanine degradation; acetoacetate and fumarate from L-phenylalanine: step 4/6. Functionally, involved in the catabolism of homogentisate (2,5-dihydroxyphenylacetate or 2,5-OH-PhAc), a central intermediate in the degradation of phenylalanine and tyrosine. Catalyzes the oxidative ring cleavage of the aromatic ring of homogentisate to yield maleylacetoacetate. The sequence is that of Homogentisate 1,2-dioxygenase from Burkholderia vietnamiensis (strain G4 / LMG 22486) (Burkholderia cepacia (strain R1808)).